We begin with the raw amino-acid sequence, 148 residues long: Protein PLANT CADMIUM RESISTANCE 9 (148 aa).

A helical membrane pass occupies residues 59 to 78; that stretch reads LAGLMVVAMSSIGCGWYYAS.

It belongs to the cornifelin family.

The protein localises to the membrane. Functionally, may be involved in cadmium resistance. This Arabidopsis thaliana (Mouse-ear cress) protein is Protein PLANT CADMIUM RESISTANCE 9 (PCR9).